The primary structure comprises 122 residues: Serum amyloid A-3 protein (122 aa).

Positions 1-18 are cleaved as a signal peptide; sequence MKPSIAIILCILILGVDS. Positions 87 to 122 are disordered; the sequence is TGHGAEDSRADQFANEWGRSGKDPNHFRPAGLPKRY.

This sequence belongs to the SAA family. Found in various tissues.

The protein resides in the secreted. Functionally, major acute phase reactant. Apolipoprotein of the HDL complex. In vitro exhibits antimicrobial activity against Escherichia coli, Streptococcus uberis and Pseudomonas aeruginosa. The protein is Serum amyloid A-3 protein (Saa3) of Mus musculus (Mouse).